We begin with the raw amino-acid sequence, 398 residues long: Small ribosomal subunit protein uS3m (398 aa).

It belongs to the universal ribosomal protein uS3 family. As to quaternary structure, component of the mitochondrial small ribosomal subunit (mt-SSU). Mature yeast 74S mitochondrial ribosomes consist of a small (37S) and a large (54S) subunit. The 37S small subunit contains a 15S ribosomal RNA (15S mt-rRNA) and 34 different proteins. The 54S large subunit contains a 21S rRNA (21S mt-rRNA) and 46 different proteins. uS3m, uS4m and uS5m form the narrow entry site of the mRNA channel.

The protein localises to the mitochondrion. Its function is as follows. Component of the mitochondrial ribosome (mitoribosome), a dedicated translation machinery responsible for the synthesis of mitochondrial genome-encoded proteins, including at least some of the essential transmembrane subunits of the mitochondrial respiratory chain. The mitoribosomes are attached to the mitochondrial inner membrane and translation products are cotranslationally integrated into the membrane. uS3m is essential for mitochondrial protein synthesis and required for the maturation of small ribosomal subunits. This chain is Small ribosomal subunit protein uS3m (VAR1), found in Saccharomyces cerevisiae (strain ATCC 204508 / S288c) (Baker's yeast).